A 278-amino-acid polypeptide reads, in one-letter code: uncharacterized protein (278 aa).

The signal sequence occupies residues 1–20 (MSPLIVGTLIIILLSGLATA). Gly-96 is lipidated: GPI-anchor amidated glycine. Residues 97 to 278 (TFLTSPTAKR…QLIMQTFNGS (182 aa)) constitute a propeptide, removed in mature form.

It localises to the cell membrane. This is an uncharacterized protein from Schizosaccharomyces pombe (strain 972 / ATCC 24843) (Fission yeast).